A 152-amino-acid chain; its full sequence is NADH-quinone oxidoreductase subunit I 1 (152 aa).

2 4Fe-4S ferredoxin-type domains span residues 53 to 83 (MKLG…MKSD) and 94 to 123 (VTYV…LGTG). [4Fe-4S] cluster is bound by residues cysteine 63, cysteine 66, cysteine 69, cysteine 73, cysteine 103, cysteine 106, cysteine 109, and cysteine 113.

This sequence belongs to the complex I 23 kDa subunit family. As to quaternary structure, NDH-1 is composed of 14 different subunits. Subunits NuoA, H, J, K, L, M, N constitute the membrane sector of the complex. It depends on [4Fe-4S] cluster as a cofactor.

Its subcellular location is the cell inner membrane. The enzyme catalyses a quinone + NADH + 5 H(+)(in) = a quinol + NAD(+) + 4 H(+)(out). In terms of biological role, NDH-1 shuttles electrons from NADH, via FMN and iron-sulfur (Fe-S) centers, to quinones in the respiratory chain. The immediate electron acceptor for the enzyme in this species is believed to be ubiquinone. Couples the redox reaction to proton translocation (for every two electrons transferred, four hydrogen ions are translocated across the cytoplasmic membrane), and thus conserves the redox energy in a proton gradient. This chain is NADH-quinone oxidoreductase subunit I 1, found in Koribacter versatilis (strain Ellin345).